The chain runs to 162 residues: Succinate dehydrogenase assembly factor 2, mitochondrial (162 aa).

The N-terminal 35 residues, 1–35 (MHNMFPALTKTLSLQGYKIINSQTGSAAWSCGRRW), are a transit peptide targeting the mitochondrion.

It belongs to the SDHAF2 family. As to quaternary structure, interacts with SDH1 within the SDH catalytic dimer.

The protein resides in the mitochondrion matrix. Its function is as follows. Plays an essential role in the assembly of succinate dehydrogenase (SDH), an enzyme complex (also referred to as respiratory complex II) that is a component of both the tricarboxylic acid (TCA) cycle and the mitochondrial electron transport chain, and which couples the oxidation of succinate to fumarate with the reduction of ubiquinone (coenzyme Q) to ubiquinol. Required for flavinylation (covalent attachment of FAD) of the flavoprotein subunit SDH1 of the SDH catalytic dimer. It is unclear whether it participates in the chemistry of FAD attachment (enzymatic function) or acts as a chaperone that maintains SDH1 in a conformation that is susceptible to autocatalytic FAD attachment. Does not bind FAD or FADH(2) in vitro. Involved in sporulation. Required for the full activation of the early meiotic inducer IME1. The polypeptide is Succinate dehydrogenase assembly factor 2, mitochondrial (Saccharomyces cerevisiae (strain ATCC 204508 / S288c) (Baker's yeast)).